Reading from the N-terminus, the 219-residue chain is RING-H2 finger protein ATL78 (219 aa).

Residues 57-77 (VMVLSVLLCALVCSLGLNSII) form a helical membrane-spanning segment. The RING-type; atypical zinc finger occupies 131–173 (CAICLSEFVAEERVKLLPTCHHGFHVRCIDKWLSSHSSCPTCR).

The protein belongs to the RING-type zinc finger family. ATL subfamily.

It is found in the membrane. The catalysed reaction is S-ubiquitinyl-[E2 ubiquitin-conjugating enzyme]-L-cysteine + [acceptor protein]-L-lysine = [E2 ubiquitin-conjugating enzyme]-L-cysteine + N(6)-ubiquitinyl-[acceptor protein]-L-lysine.. It participates in protein modification; protein ubiquitination. In Arabidopsis thaliana (Mouse-ear cress), this protein is RING-H2 finger protein ATL78 (ATL78).